The chain runs to 178 residues: Ribose 1,5-bisphosphate phosphokinase PhnN (178 aa).

9 to 16 is a binding site for ATP; the sequence is GPSGSGKD.

It belongs to the ribose 1,5-bisphosphokinase family.

It carries out the reaction alpha-D-ribose 1,5-bisphosphate + ATP = 5-phospho-alpha-D-ribose 1-diphosphate + ADP. It participates in metabolic intermediate biosynthesis; 5-phospho-alpha-D-ribose 1-diphosphate biosynthesis; 5-phospho-alpha-D-ribose 1-diphosphate from D-ribose 5-phosphate (route II): step 3/3. In terms of biological role, catalyzes the phosphorylation of ribose 1,5-bisphosphate to 5-phospho-D-ribosyl alpha-1-diphosphate (PRPP). The polypeptide is Ribose 1,5-bisphosphate phosphokinase PhnN (Pantoea vagans (strain C9-1) (Pantoea agglomerans (strain C9-1))).